A 124-amino-acid polypeptide reads, in one-letter code: Biogenesis of lysosome-related organelles complex 1 subunit CNL1 (124 aa).

Residues 1 to 20 (MMSENITAVEPQENNDVEAD) form a disordered region. Residues 75–98 (IGMAKDLLQKCDDLEKHYDQLDAV) adopt a coiled-coil conformation.

Belongs to the BLOC1S4 family. As to quaternary structure, component of the biogenesis of lysosome-related organelles complex-1 (BLOC-1).

The protein localises to the cytoplasm. Functionally, component of the biogenesis of lysosome-related organelles complex-1 (BLOC-1), a complex that is involved in endosomal cargo sorting. This chain is Biogenesis of lysosome-related organelles complex 1 subunit CNL1 (CLN1), found in Kluyveromyces lactis (strain ATCC 8585 / CBS 2359 / DSM 70799 / NBRC 1267 / NRRL Y-1140 / WM37) (Yeast).